The chain runs to 147 residues: Large ribosomal subunit protein uL15 (147 aa).

Positions 16 to 63 are disordered; the sequence is SSRARVGRGIGSGLGKTAGRGHKGSFARKGGGKIKPGFEGGQTPMQRR. A compositionally biased stretch (gly residues) spans 23 to 33; the sequence is RGIGSGLGKTA. The segment covering 34–47 has biased composition (basic residues); the sequence is GRGHKGSFARKGGG.

This sequence belongs to the universal ribosomal protein uL15 family. In terms of assembly, part of the 50S ribosomal subunit.

Its function is as follows. Binds to the 23S rRNA. This Xylella fastidiosa (strain Temecula1 / ATCC 700964) protein is Large ribosomal subunit protein uL15.